The chain runs to 189 residues: uncharacterized protein (189 aa).

The 174-residue stretch at 1 to 174 (MKCWTLGDRV…GMEKGVREAL (174 aa)) folds into the Macro domain.

This is an uncharacterized protein from Aeropyrum pernix (strain ATCC 700893 / DSM 11879 / JCM 9820 / NBRC 100138 / K1).